Here is an 88-residue protein sequence, read N- to C-terminus: Exodeoxyribonuclease 7 small subunit (88 aa).

This sequence belongs to the XseB family. In terms of assembly, heterooligomer composed of large and small subunits.

The protein resides in the cytoplasm. The enzyme catalyses Exonucleolytic cleavage in either 5'- to 3'- or 3'- to 5'-direction to yield nucleoside 5'-phosphates.. In terms of biological role, bidirectionally degrades single-stranded DNA into large acid-insoluble oligonucleotides, which are then degraded further into small acid-soluble oligonucleotides. The sequence is that of Exodeoxyribonuclease 7 small subunit from Tolumonas auensis (strain DSM 9187 / NBRC 110442 / TA 4).